Consider the following 233-residue polypeptide: Lysoplasmalogenase TMEM86B (233 aa).

Residues 1-30 are Cytoplasmic-facing; the sequence is MPCCDPYPWIGLNVGRLSSFPLLKYPQVRR. The helical transmembrane segment at 31–47 threads the bilayer; it reads WLAPFIVACSLYFLLWI. At 48 to 53 the chain is on the extracellular side; that stretch reads PEDQPS. Residues 54 to 75 form a helical membrane-spanning segment; that stretch reads WVSALVKCQPILCLVLFLWAVA. Residues 76–81 are Cytoplasmic-facing; that stretch reads PGGSYT. The chain crosses the membrane as a helical span at residues 82–100; that stretch reads WLLQGALTCSAVGDACLIW. The Extracellular portion of the chain corresponds to 101-106; that stretch reads PEAFFY. A helical transmembrane segment spans residues 107–124; that stretch reads GMAVFSVAHLLYLWAFGL. At 125–130 the chain is on the cytoplasmic side; that stretch reads SPLQPG. Residues 131-147 form a helical membrane-spanning segment; the sequence is LLLCTTLASLTYYSFLL. The Extracellular segment spans residues 148 to 153; it reads LHLEPN. A helical membrane pass occupies residues 154 to 170; sequence MVLPVAAYGLILNTMLW. At 171-178 the chain is on the cytoplasmic side; that stretch reads RGLVLGRS. Residues 179-195 form a helical membrane-spanning segment; sequence AGWGAVLFIFSDGVLAW. Topologically, residues 196 to 206 are extracellular; sequence DTFVYTLPFAR. A helical transmembrane segment spans residues 207-225; that stretch reads LVTMSTYYAAQLLLTLSAL. The Cytoplasmic portion of the chain corresponds to 226–233; the sequence is RSPGLKTH.

The protein belongs to the TMEM86 family. Homodimer.

The protein localises to the endoplasmic reticulum membrane. It is found in the cytoplasm. It carries out the reaction a 1-O-(1Z-alkenyl)-sn-glycero-3-phosphocholine + H2O = a 2,3-saturated aldehyde + sn-glycerol 3-phosphocholine. The catalysed reaction is a 1-O-(1Z-alkenyl)-sn-glycero-3-phosphoethanolamine + H2O = a 2,3-saturated aldehyde + sn-glycero-3-phosphoethanolamine. With respect to regulation, competitively inhibited by lysophosphatidic acid. Functionally, catalyzes the hydrolysis of the vinyl ether bond of choline or ethanolamine lysoplasmalogens, forming fatty aldehyde and glycerophosphocholine or glycerophosphoethanolamine, respectively and is specific for the sn-2-deacylated (lyso) form of plasmalogen. The sequence is that of Lysoplasmalogenase TMEM86B (Tmem86b) from Rattus norvegicus (Rat).